Here is a 207-residue protein sequence, read N- to C-terminus: RNA chaperone ProQ (207 aa).

The disordered stretch occupies residues Thr-100–Leu-156. Residues Arg-111–Lys-126 are compositionally biased toward basic and acidic residues. A compositionally biased stretch (basic residues) spans Pro-127 to Asn-139.

Belongs to the ProQ family.

It localises to the cytoplasm. Functionally, RNA chaperone with significant RNA binding, RNA strand exchange and RNA duplexing activities. This Vibrio vulnificus (strain CMCP6) protein is RNA chaperone ProQ.